We begin with the raw amino-acid sequence, 114 residues long: Protein Tat (114 aa).

An interaction with human CREBBP region spans residues 1–24 (MDPVDPEVPPWHHPGSQPQIPCNN). The transactivation stretch occupies residues 1–48 (MDPVDPEVPPWHHPGSQPQIPCNNCYCKRCCYHCYVCFVRKGLGISYG). 3 residues coordinate Zn(2+): Cys-22, Cys-25, and Cys-27. Positions 22–37 (CNNCYCKRCCYHCYVC) are cysteine-rich. Lys-28 is modified (N6-acetyllysine; by host PCAF). Zn(2+) is bound by residues Cys-30, His-33, Cys-34, and Cys-37. The interval 38-48 (FVRKGLGISYG) is core. The interval 48 to 114 (GRKKRGRPAA…CHCCTRTSEQ (67 aa)) is disordered. Positions 49-56 (RKKRGRPA) match the Nuclear localization signal, RNA-binding (TAR), and protein transduction motif. Positions 49–84 (RKKRGRPAAASHPDHKDPVPKQSPTITKRKQERQEE) are interaction with the host capping enzyme RNGTT. Residues Lys-50 and Lys-51 each carry the N6-acetyllysine; by host EP300 and GCN5L2 modification. Asymmetric dimethylarginine; by host PRMT6 is present on Arg-52. A Glycyl lysine isopeptide (Lys-Gly) (interchain with G-Cter in ubiquitin) cross-link involves residue Lys-69.

It belongs to the lentiviruses Tat family. As to quaternary structure, interacts with host CCNT1. Associates with the P-TEFb complex composed at least of Tat, P-TEFb (CDK9 and CCNT1), TAR RNA, RNA Pol II. Recruits the HATs CREBBP, TAF1/TFIID, EP300, PCAF and GCN5L2. Interacts with host KAT5/Tip60; this interaction targets the latter to degradation. Interacts with the host deacetylase SIRT1. Interacts with host capping enzyme RNGTT; this interaction stimulates RNGTT. Binds to host KDR, and to the host integrins ITGAV/ITGB3 and ITGA5/ITGB1. Interacts with host KPNB1/importin beta-1 without previous binding to KPNA1/importin alpha-1. Interacts with EIF2AK2. Interacts with host nucleosome assembly protein NAP1L1; this interaction may be required for the transport of Tat within the nucleus, since the two proteins interact at the nuclear rim. Interacts with host C1QBP/SF2P32; this interaction involves lysine-acetylated Tat. Interacts with the host chemokine receptors CCR2, CCR3 and CXCR4. Interacts with host DPP4/CD26; this interaction may trigger an anti-proliferative effect. Interacts with host LDLR. Interacts with the host extracellular matrix metalloproteinase MMP1. Interacts with host PRMT6; this interaction mediates Tat's methylation. Interacts with, and is ubiquitinated by MDM2/Hdm2. Interacts with host PSMC3 and HTATIP2. Interacts with STAB1; this interaction may overcome SATB1-mediated repression of IL2 and IL2RA (interleukin) in T cells by binding to the same domain than HDAC1. Interacts (when acetylated) with human CDK13, thereby increasing HIV-1 mRNA splicing and promoting the production of the doubly spliced HIV-1 protein Nef. Interacts with host TBP; this interaction modulates the activity of transcriptional pre-initiation complex. Interacts with host RELA. Interacts with host PLSCR1; this interaction negatively regulates Tat transactivation activity by altering its subcellular distribution. In terms of processing, asymmetrical arginine methylation by host PRMT6 seems to diminish the transactivation capacity of Tat and affects the interaction with host CCNT1. Acetylation by EP300, CREBBP, GCN5L2/GCN5 and PCAF regulates the transactivation activity of Tat. EP300-mediated acetylation of Lys-50 promotes dissociation of Tat from the TAR RNA through the competitive binding to PCAF's bromodomain. In addition, the non-acetylated Tat's N-terminus can also interact with PCAF. PCAF-mediated acetylation of Lys-28 enhances Tat's binding to CCNT1. Lys-50 is deacetylated by SIRT1. Post-translationally, polyubiquitination by host MDM2 does not target Tat to degradation, but activates its transactivation function and fosters interaction with CCNT1 and TAR RNA. In terms of processing, phosphorylated by EIF2AK2 on serine and threonine residues adjacent to the basic region important for TAR RNA binding and function. Phosphorylation of Tat by EIF2AK2 is dependent on the prior activation of EIF2AK2 by dsRNA.

It is found in the host nucleus. Its subcellular location is the host nucleolus. The protein localises to the host cytoplasm. It localises to the secreted. Transcriptional activator that increases RNA Pol II processivity, thereby increasing the level of full-length viral transcripts. Recognizes a hairpin structure at the 5'-LTR of the nascent viral mRNAs referred to as the transactivation responsive RNA element (TAR) and recruits the cyclin T1-CDK9 complex (P-TEFb complex) that will in turn hyperphosphorylate the RNA polymerase II to allow efficient elongation. The CDK9 component of P-TEFb and other Tat-activated kinases hyperphosphorylate the C-terminus of RNA Pol II that becomes stabilized and much more processive. Other factors such as HTATSF1/Tat-SF1, SUPT5H/SPT5, and HTATIP2 are also important for Tat's function. Besides its effect on RNA Pol II processivity, Tat induces chromatin remodeling of proviral genes by recruiting the histone acetyltransferases (HATs) CREBBP, EP300 and PCAF to the chromatin. This also contributes to the increase in proviral transcription rate, especially when the provirus integrates in transcriptionally silent region of the host genome. To ensure maximal activation of the LTR, Tat mediates nuclear translocation of NF-kappa-B by interacting with host RELA. Through its interaction with host TBP, Tat may also modulate transcription initiation. Tat can reactivate a latently infected cell by penetrating in it and transactivating its LTR promoter. In the cytoplasm, Tat is thought to act as a translational activator of HIV-1 mRNAs. In terms of biological role, extracellular circulating Tat can be endocytosed by surrounding uninfected cells via the binding to several surface receptors such as CD26, CXCR4, heparan sulfate proteoglycans (HSPG) or LDLR. Neurons are rarely infected, but they internalize Tat via their LDLR. Through its interaction with nuclear HATs, Tat is potentially able to control the acetylation-dependent cellular gene expression. Modulates the expression of many cellular genes involved in cell survival, proliferation or in coding for cytokines or cytokine receptors. Tat plays a role in T-cell and neurons apoptosis. Tat induced neurotoxicity and apoptosis probably contribute to neuroAIDS. Circulating Tat also acts as a chemokine-like and/or growth factor-like molecule that binds to specific receptors on the surface of the cells, affecting many cellular pathways. In the vascular system, Tat binds to ITGAV/ITGB3 and ITGA5/ITGB1 integrins dimers at the surface of endothelial cells and competes with bFGF for heparin-binding sites, leading to an excess of soluble bFGF. The protein is Protein Tat of Homo sapiens (Human).